A 72-amino-acid polypeptide reads, in one-letter code: Translation initiation factor IF-1 (72 aa).

The region spanning 1 to 72 (MAKEDNIEMQ…SKGRIVFRAR (72 aa)) is the S1-like domain.

Belongs to the IF-1 family. In terms of assembly, component of the 30S ribosomal translation pre-initiation complex which assembles on the 30S ribosome in the order IF-2 and IF-3, IF-1 and N-formylmethionyl-tRNA(fMet); mRNA recruitment can occur at any time during PIC assembly.

The protein localises to the cytoplasm. Its function is as follows. One of the essential components for the initiation of protein synthesis. Stabilizes the binding of IF-2 and IF-3 on the 30S subunit to which N-formylmethionyl-tRNA(fMet) subsequently binds. Helps modulate mRNA selection, yielding the 30S pre-initiation complex (PIC). Upon addition of the 50S ribosomal subunit IF-1, IF-2 and IF-3 are released leaving the mature 70S translation initiation complex. The chain is Translation initiation factor IF-1 from Shewanella frigidimarina (strain NCIMB 400).